Reading from the N-terminus, the 67-residue chain is Bombesin (67 aa).

The first 30 residues, 1–30 (MSLLPAVKVLPLGYLGIVLVFSLILRSAMV), serve as a signal peptide directing secretion. Residues 31-49 (DFIQDAGKLERIDTYKREA) constitute a propeptide that is removed on maturation. The residue at position 50 (Gln50) is a Pyrrolidone carboxylic acid. Met64 is modified (methionine amide).

The protein belongs to the bombesin/neuromedin-B/ranatensin family. In terms of tissue distribution, expressed by the skin dorsal glands.

It localises to the secreted. Its function is as follows. Stimulates smooth muscle contraction in isolated rat stomach strip. In Sanguirana varians (Palawan frog), this protein is Bombesin.